The primary structure comprises 201 residues: Inosine triphosphate pyrophosphatase (201 aa).

16–21 lines the ITP pocket; that stretch reads TGNAKK. Position 44 (E44) interacts with Mg(2+). Residues K56, 72 to 73, K89, 148 to 151, K171, and 176 to 177 contribute to the ITP site; these read DT, FGWD, and HR.

The protein belongs to the HAM1 NTPase family. Homodimer. The cofactor is Mg(2+). Mn(2+) serves as cofactor.

It localises to the cytoplasm. It carries out the reaction ITP + H2O = IMP + diphosphate + H(+). The enzyme catalyses dITP + H2O = dIMP + diphosphate + H(+). The catalysed reaction is XTP + H2O = XMP + diphosphate + H(+). Its function is as follows. Pyrophosphatase that hydrolyzes non-canonical purine nucleotides such as inosine triphosphate (ITP), deoxyinosine triphosphate (dITP) or xanthosine 5'-triphosphate (XTP) to their respective monophosphate derivatives. The enzyme does not distinguish between the deoxy- and ribose forms. Probably excludes non-canonical purines from RNA and DNA precursor pools, thus preventing their incorporation into RNA and DNA and avoiding chromosomal lesions. The protein is Inosine triphosphate pyrophosphatase of Sorghum bicolor (Sorghum).